A 155-amino-acid chain; its full sequence is Ribonuclease 2B (155 aa).

The N-terminal stretch at 1-25 (MGLKLLESRLCLLLLLGLVLTLVSC) is a signal peptide. His38 functions as the Proton acceptor in the catalytic mechanism. Disulfide bonds link Cys47-Cys106, Cys61-Cys118, Cys79-Cys133, and Cys86-Cys94. 62-66 (KDLNT) is a substrate binding site. A glycan (N-linked (GlcNAc...) asparagine) is linked at Asn114. Catalysis depends on His150, which acts as the Proton donor.

It belongs to the pancreatic ribonuclease family.

It catalyses the reaction an [RNA] containing cytidine + H2O = an [RNA]-3'-cytidine-3'-phosphate + a 5'-hydroxy-ribonucleotide-3'-[RNA].. The enzyme catalyses an [RNA] containing uridine + H2O = an [RNA]-3'-uridine-3'-phosphate + a 5'-hydroxy-ribonucleotide-3'-[RNA].. In terms of biological role, this is a non-secretory ribonuclease. It is a pyrimidine specific nuclease with a slight preference for U. Cytotoxin and helminthotoxin. Possesses a wide variety of biological activities. The polypeptide is Ribonuclease 2B (Mus musculus (Mouse)).